Consider the following 518-residue polypeptide: ATP synthase subunit alpha (518 aa).

Residue 169–176 coordinates ATP; the sequence is GDRQTGKT.

It belongs to the ATPase alpha/beta chains family. F-type ATPases have 2 components, CF(1) - the catalytic core - and CF(0) - the membrane proton channel. CF(1) has five subunits: alpha(3), beta(3), gamma(1), delta(1), epsilon(1). CF(0) has three main subunits: a(1), b(2) and c(9-12). The alpha and beta chains form an alternating ring which encloses part of the gamma chain. CF(1) is attached to CF(0) by a central stalk formed by the gamma and epsilon chains, while a peripheral stalk is formed by the delta and b chains.

The protein resides in the cell membrane. It carries out the reaction ATP + H2O + 4 H(+)(in) = ADP + phosphate + 5 H(+)(out). In terms of biological role, produces ATP from ADP in the presence of a proton gradient across the membrane. The alpha chain is a regulatory subunit. This is ATP synthase subunit alpha from Mycoplasma pneumoniae (strain ATCC 29342 / M129 / Subtype 1) (Mycoplasmoides pneumoniae).